A 103-amino-acid chain; its full sequence is Floral defensin-like protein 1 (103 aa).

The first 25 residues, 1–25, serve as a signal peptide directing secretion; that stretch reads MARSICFFAVAILALMLFAAYDAEA. 5 disulfide bridges follow: C28–C72, C32–C48, C39–C59, C45–C66, and C49–C68. A propeptide spans 73 to 103 (removed in mature form); it reads VFEKTEATQTETFTKDVNTLAEALLEADMMV.

It belongs to the DEFL family. Post-translationally, when compared to other plant defensins, the petunia defensins have an additional fifth disulfide bond. Petals.

The protein localises to the secreted. It localises to the vacuole. Functionally, plant defense peptide with antifungal activity against F.oxysporum and B.cinerea. The chain is Floral defensin-like protein 1 (D1) from Petunia hybrida (Petunia).